We begin with the raw amino-acid sequence, 1044 residues long: Outer dynein arm-docking complex subunit 2 (1044 aa).

2 stretches are compositionally biased toward basic and acidic residues: residues 317–338 (IKFS…EVAI) and 379–401 (SKDR…EKSR). Disordered stretches follow at residues 317–409 (IKFS…PGRA) and 423–446 (ISDS…ANAD). 5 HEAT repeats span residues 448–485 (PSEY…AQET), 487–527 (QLAI…NPQI), 530–568 (NIVD…FRRA), 627–665 (AIRK…EENY), and 668–706 (AIKA…DEET). ARM repeat units lie at residues 484 to 523 (ETCQ…EISH), 525 to 564 (PQIR…NVAK), 535 to 577 (GGLP…RHGG), 622 to 661 (YANK…ECAS), 663 to 702 (ENYR…QCAE), 746 to 785 (KENV…ECCQ), 828 to 867 (PESM…PCIQ), 871 to 910 (DAGE…NIAK), 912 to 951 (QENL…RCCM), 953 to 992 (GRNR…QLSE), and 1004 to 1031 (GAVK…ISNI). 5 HEAT repeats span residues 831 to 870 (MMII…QNAK), 874 to 914 (EMVR…DQEN), 916 to 955 (AVIT…WGRN), 958 to 996 (AFGE…DADN), and 999 to 1037 (TMHE…LALA).

In terms of assembly, component of the outer dynein arm-docking complex along with ODAD1, ODAD3, ODAD4 and CLXN. Interacts with CFAP61. Expressed in trachea multiciliated cells.

Its subcellular location is the cytoplasm. It localises to the cytoskeleton. The protein resides in the cilium axoneme. It is found in the cilium basal body. Component of the outer dynein arm-docking complex (ODA-DC) that mediates outer dynein arms (ODA) binding onto the doublet microtubule. Involved in mediating assembly of both ODAs and their axonemal docking complex onto ciliary microtubules. The polypeptide is Outer dynein arm-docking complex subunit 2 (ODAD2) (Bos taurus (Bovine)).